The primary structure comprises 217 residues: Probable GTP-binding protein EngB (217 aa).

The region spanning 27–201 (GGVEIAFAGR…AQTLSGWYLA (175 aa)) is the EngB-type G domain. GTP-binding positions include 35–42 (GRSNAGKS), 62–66 (GRTQL), 80–83 (DLPG), 147–150 (TKAD), and 180–182 (FSS). The Mg(2+) site is built by Ser42 and Thr64.

It belongs to the TRAFAC class TrmE-Era-EngA-EngB-Septin-like GTPase superfamily. EngB GTPase family. The cofactor is Mg(2+).

Its function is as follows. Necessary for normal cell division and for the maintenance of normal septation. In Aeromonas salmonicida (strain A449), this protein is Probable GTP-binding protein EngB.